Here is a 430-residue protein sequence, read N- to C-terminus: Adenylosuccinate synthetase (430 aa).

Residues 13-19 and 41-43 contribute to the GTP site; these read GDEGKGK and GHT. Catalysis depends on aspartate 14, which acts as the Proton acceptor. Residues aspartate 14 and glycine 41 each contribute to the Mg(2+) site. IMP is bound by residues 14–17, 39–42, threonine 130, arginine 144, glutamine 225, threonine 240, and arginine 304; these read DEGK and NAGH. The Proton donor role is filled by histidine 42. Substrate is bound at residue 300-306; it reads ASTGRPR. Residues arginine 306, 332 to 334, and 414 to 416 each bind GTP; these read KLD and STG.

The protein belongs to the adenylosuccinate synthetase family. As to quaternary structure, homodimer. Mg(2+) is required as a cofactor.

The protein resides in the cytoplasm. The enzyme catalyses IMP + L-aspartate + GTP = N(6)-(1,2-dicarboxyethyl)-AMP + GDP + phosphate + 2 H(+). The protein operates within purine metabolism; AMP biosynthesis via de novo pathway; AMP from IMP: step 1/2. Plays an important role in the de novo pathway of purine nucleotide biosynthesis. Catalyzes the first committed step in the biosynthesis of AMP from IMP. The polypeptide is Adenylosuccinate synthetase (Xanthomonas campestris pv. campestris (strain 8004)).